We begin with the raw amino-acid sequence, 621 residues long: Uptake hydrogenase large subunit (621 aa).

4 residues coordinate Ni(2+): Cys-75, Cys-78, Cys-600, and Cys-603.

This sequence belongs to the [NiFe]/[NiFeSe] hydrogenase large subunit family. As to quaternary structure, heterodimer of a large and a small subunit. Ni(2+) serves as cofactor.

The protein resides in the cell membrane. The catalysed reaction is H2 + A = AH2. This enzyme recycles the H(2) produced by nitrogenase to increase the production of ATP and to protect nitrogenase against inhibition or damage by O(2) under carbon- or phosphate-limited conditions. The polypeptide is Uptake hydrogenase large subunit (hupL) (Alcaligenes hydrogenophilus).